Reading from the N-terminus, the 250-residue chain is HTH-type transcriptional regulator SarS (250 aa).

2 consecutive DNA-binding regions (H-T-H motif) follow at residues 53 to 76 and 177 to 200; these read FKKI…VLVK and LKDL…NLKK.

This sequence belongs to the SarA family.

Its subcellular location is the cytoplasm. Functionally, transcriptional regulator that controls expression of some virulence factors in a cell density-dependent manner. The sequence is that of HTH-type transcriptional regulator SarS (sarS) from Staphylococcus aureus (strain MRSA252).